The following is a 222-amino-acid chain: Beta-casein (222 aa).

Positions 1–15 are cleaved as a signal peptide; sequence MKVLILACLVALALA. Thr-27 is subject to Phosphothreonine. Residues Ser-30, Ser-32, Ser-33, and Ser-34 each carry the phosphoserine modification.

The protein belongs to the beta-casein family. In terms of tissue distribution, mammary gland specific. Secreted in milk.

It localises to the secreted. Its function is as follows. Important role in determination of the surface properties of the casein micelles. This chain is Beta-casein (CSN2), found in Ovis aries (Sheep).